Consider the following 426-residue polypeptide: Putative F-box/LRR-repeat protein At4g15060 (426 aa).

Residues 25 to 71 (MDKISRLPDDLLVKVLLFLPTKIAVSTSILSKRWEFLWMWLPKLEYH) enclose the F-box domain. LRR repeat units follow at residues 50 to 75 (STSI…NTNY), 80 to 106 (EQRL…RLKF), 160 to 187 (ILKL…LLKR), 188 to 213 (VTYK…VVER), 221 to 259 (TLSI…KLTD), 265 to 290 (ETEL…HIDS), 311 to 337 (CVKV…KLCP), 338 to 363 (CDSN…EIKL), and 373 to 399 (DPAC…TWTW).

The protein is Putative F-box/LRR-repeat protein At4g15060 of Arabidopsis thaliana (Mouse-ear cress).